The primary structure comprises 432 residues: Amino-acid acetyltransferase (432 aa).

Residues 286–425 enclose the N-acetyltransferase domain; the sequence is EQLREAGIED…ASLYNFQRNS (140 aa).

This sequence belongs to the acetyltransferase family. ArgA subfamily.

The protein localises to the cytoplasm. The enzyme catalyses L-glutamate + acetyl-CoA = N-acetyl-L-glutamate + CoA + H(+). It participates in amino-acid biosynthesis; L-arginine biosynthesis; N(2)-acetyl-L-ornithine from L-glutamate: step 1/4. The protein is Amino-acid acetyltransferase of Pseudomonas paraeruginosa (strain DSM 24068 / PA7) (Pseudomonas aeruginosa (strain PA7)).